A 511-amino-acid chain; its full sequence is Cytochrome P450 71A6 (511 aa).

2 helical membrane passes run Ile-1–Leu-15 and Val-61–Pro-77. 3 N-linked (GlcNAc...) asparagine glycosylation sites follow: Asn-90, Asn-96, and Asn-167. Cys-450 provides a ligand contact to heme.

Belongs to the cytochrome P450 family. The cofactor is heme.

The protein resides in the membrane. This is Cytochrome P450 71A6 (CYP71A6) from Nepeta racemosa (Catmint).